Consider the following 116-residue polypeptide: Putative pterin-4-alpha-carbinolamine dehydratase (116 aa).

It belongs to the pterin-4-alpha-carbinolamine dehydratase family.

It catalyses the reaction (4aS,6R)-4a-hydroxy-L-erythro-5,6,7,8-tetrahydrobiopterin = (6R)-L-erythro-6,7-dihydrobiopterin + H2O. This is Putative pterin-4-alpha-carbinolamine dehydratase from Stenotrophomonas maltophilia (strain R551-3).